The following is a 488-amino-acid chain: MATLESLTFDNGFARLPETYYARVCPTPVPDPYLVCYSPEALSLLDLDATELKRPETIETLAGNRLLPGMDAIAALYAGHQFGHYVPQLGDGRAILLGEVRNRAGEGWEIQLKGAGRTPYSRGGDGRAVLRSSIREFLCSEAMHALDIPTTRALAVVGSDHPVYREDEETAALVTRLAPSFVRFGSFEVFYYRNQVEPIRHLADYVIARYYPELKTLADPYPEFLRQVSLRTAELMAQWQAVGFSHGVMNTDNMSILGLTLDYGPFGFLDAFDPGFVCNHSDTGGRYAFDQQPDVAAWNLTKLAQALVPLMSVETASQAISEYPQAFGRAYLARMAAKFGLAPGDDTVPLITDALQLLAGNRVDYTIFLRKLCAFDSQADAGNAPLRDLFLDRAAFDAWAVRYGAALRQHGQPDAERAATMRTRNPKYILRNYLAENAIRRAADLRDYSEVERLHRLLARPFDEQPAFEAYAAEPPDWAKRIEVSCSS.

ATP contacts are provided by Gly90, Gly92, Arg93, Lys113, Asp125, Gly126, Arg176, and Arg183. Asp252 serves as the catalytic Proton acceptor. The Mg(2+) site is built by Asn253 and Asp262. Residue Asp262 participates in ATP binding.

This sequence belongs to the SELO family. The cofactor is Mg(2+). Mn(2+) serves as cofactor.

The enzyme catalyses L-seryl-[protein] + ATP = 3-O-(5'-adenylyl)-L-seryl-[protein] + diphosphate. It carries out the reaction L-threonyl-[protein] + ATP = 3-O-(5'-adenylyl)-L-threonyl-[protein] + diphosphate. The catalysed reaction is L-tyrosyl-[protein] + ATP = O-(5'-adenylyl)-L-tyrosyl-[protein] + diphosphate. It catalyses the reaction L-histidyl-[protein] + UTP = N(tele)-(5'-uridylyl)-L-histidyl-[protein] + diphosphate. The enzyme catalyses L-seryl-[protein] + UTP = O-(5'-uridylyl)-L-seryl-[protein] + diphosphate. It carries out the reaction L-tyrosyl-[protein] + UTP = O-(5'-uridylyl)-L-tyrosyl-[protein] + diphosphate. In terms of biological role, nucleotidyltransferase involved in the post-translational modification of proteins. It can catalyze the addition of adenosine monophosphate (AMP) or uridine monophosphate (UMP) to a protein, resulting in modifications known as AMPylation and UMPylation. The sequence is that of Protein nucleotidyltransferase YdiU from Thiobacillus denitrificans (strain ATCC 25259 / T1).